The primary structure comprises 270 residues: Meiotic recombination 1 protein (270 aa).

Residues 191 to 225 (EIKLNKTQITFLIGAKGTRIESLREKSGASIKIIP) enclose the KH domain.

Functionally, required for chromosome pairing and genetic recombination. MER1 may function to bring the axial elements of the synaptonemal complex corresponding to homologous chromosomes together by initiating recombination. MER1 might be responsible for regulating the MER2 gene and/or gene product. This is Meiotic recombination 1 protein (MER1) from Saccharomyces cerevisiae (strain ATCC 204508 / S288c) (Baker's yeast).